The primary structure comprises 305 residues: 3-methyl-2-oxobutanoate hydroxymethyltransferase (305 aa).

Mg(2+) is bound by residues aspartate 52 and aspartate 95. 3-methyl-2-oxobutanoate is bound by residues 52–53, aspartate 95, and lysine 125; that span reads DS. Glutamate 127 lines the Mg(2+) pocket. Glutamate 194 functions as the Proton acceptor in the catalytic mechanism.

The protein belongs to the PanB family. Homodecamer; pentamer of dimers. Mg(2+) is required as a cofactor.

The protein localises to the cytoplasm. The enzyme catalyses 3-methyl-2-oxobutanoate + (6R)-5,10-methylene-5,6,7,8-tetrahydrofolate + H2O = 2-dehydropantoate + (6S)-5,6,7,8-tetrahydrofolate. Its pathway is cofactor biosynthesis; (R)-pantothenate biosynthesis; (R)-pantoate from 3-methyl-2-oxobutanoate: step 1/2. Functionally, catalyzes the reversible reaction in which hydroxymethyl group from 5,10-methylenetetrahydrofolate is transferred onto alpha-ketoisovalerate to form ketopantoate. The polypeptide is 3-methyl-2-oxobutanoate hydroxymethyltransferase (Anaeromyxobacter sp. (strain Fw109-5)).